The sequence spans 467 residues: Variant surface glycoprotein 7 (467 aa).

Residues 77–87 show a composition bias toward polar residues; that stretch reads TIAAGATNTKL. Residues 77–133 form a disordered region; that stretch reads TIAAGATNTKLSGHHPNQGRRGRRRSSSARPNNSKGNSPSKRAGGAVRGETPASGRL. Basic residues predominate over residues 93–103; it reads NQGRRGRRRSS. Over residues 107–116 the composition is skewed to polar residues; the sequence is PNNSKGNSPS. 2 N-linked (GlcNAc...) asparagine glycosylation sites follow: Asn-108 and Asn-252. The disordered stretch occupies residues 382-407; it reads AEKVENPRSQGNPETAENKKEGGNTA. Asn-416 carries N-linked (GlcNAc...) asparagine glycosylation. Asp-444 carries GPI-anchor amidated aspartate lipidation. A propeptide spans 445–467 (removed in mature form); that stretch reads SSFLLSKQFALSVVSAAFAALLF.

The protein resides in the cell membrane. Functionally, VSG forms a coat on the surface of the parasite. The trypanosome evades the immune response of the host by expressing a series of antigenically distinct VSGs from an estimated 1000 VSG genes. This Trypanosoma brucei rhodesiense protein is Variant surface glycoprotein 7.